The sequence spans 401 residues: Nodal homolog 3-C (401 aa).

Positions 1–18 are cleaved as a signal peptide; sequence MAFLSLFLCLVFSSPLMA. Positions 19-274 are excised as a propeptide; it reads MPPALQGRKA…KVNGFRRLRR (256 aa). N168, N337, and N344 each carry an N-linked (GlcNAc...) asparagine glycan. Cystine bridges form between C299-C365 and C328-C396.

Belongs to the TGF-beta family. Monomer. The propeptide region interacts with bmp4 in a non-covalent manner. As to expression, expressed in the dorsal marginal region of late blastula, becoming restricted to the Spemann organizer at the early gastrula stage.

It is found in the secreted. Functionally, exhibits mesoderm-dorsalizing activity and neural-inducing activity, but lacks mesoderm-inducing activity. Regulates the expression of specific mesodermal and neural genes. Induces convergent extension movements at the embryonic midline by activating the fgf signaling pathway to induce t/bra expression in the organizer region. Acts with wnt11 to induce Spemann organizer cells and induce axis formation. The unprocessed protein antagonizes bmp-signaling. The sequence is that of Nodal homolog 3-C from Xenopus tropicalis (Western clawed frog).